A 149-amino-acid chain; its full sequence is Transcriptional repressor NrdR (149 aa).

A zinc finger lies at 3–34 (CPFCGNLETQVVETRVSEDADFIRRRRQCGAC). The ATP-cone domain maps to 49–139 (PAIVKKDGRR…VYRSFEDIDE (91 aa)).

It belongs to the NrdR family. The cofactor is Zn(2+).

Its function is as follows. Negatively regulates transcription of bacterial ribonucleotide reductase nrd genes and operons by binding to NrdR-boxes. This is Transcriptional repressor NrdR from Polaromonas sp. (strain JS666 / ATCC BAA-500).